A 439-amino-acid polypeptide reads, in one-letter code: Forkhead box protein J1-B (439 aa).

Positions 124-218 (KPPYSYATLI…MNGAMKKRRL (95 aa)) form a DNA-binding region, fork-head.

This sequence belongs to the FOXJ1 family.

The protein localises to the nucleus. Functionally, key transcription factor required for motile ciliogenesis. Activates genes essential for motile cilia formation and function. This chain is Forkhead box protein J1-B (foxj1-b), found in Xenopus laevis (African clawed frog).